A 53-amino-acid chain; its full sequence is Abaecin (53 aa).

The first 19 residues, 1 to 19 (MKVVIFIFALLATICAAFA), serve as a signal peptide directing secretion.

The protein resides in the secreted. This peptide has bactericidal activity. The protein is Abaecin of Apis mellifera (Honeybee).